The primary structure comprises 500 residues: Transcription termination/antitermination protein NusA (500 aa).

The S1 motif domain maps to 135 to 205; the sequence is GEIVTGVVKK…RGAQLFVTRS (71 aa). The KH domain occupies 307-373; sequence KHTMDIAVEA…FTKYLDIDEE (67 aa). 2 tandem repeats follow at residues 369–419 and 444–494. The tract at residues 369-494 is 2 X 51 AA approximate repeats; the sequence is DIDEEFATVL…ELIMAARNIC (126 aa).

Belongs to the NusA family. In terms of assembly, monomer. Binds directly to the core enzyme of the DNA-dependent RNA polymerase and to nascent RNA.

It localises to the cytoplasm. Functionally, participates in both transcription termination and antitermination. This chain is Transcription termination/antitermination protein NusA, found in Salmonella typhimurium (strain LT2 / SGSC1412 / ATCC 700720).